The primary structure comprises 205 residues: Small ribosomal subunit protein uS4 (205 aa).

The S4 RNA-binding domain maps to 94–157 (SRLDTVVYRM…KQIPLIQESV (64 aa)).

This sequence belongs to the universal ribosomal protein uS4 family. Part of the 30S ribosomal subunit. Contacts protein S5. The interaction surface between S4 and S5 is involved in control of translational fidelity.

In terms of biological role, one of the primary rRNA binding proteins, it binds directly to 16S rRNA where it nucleates assembly of the body of the 30S subunit. Functionally, with S5 and S12 plays an important role in translational accuracy. The chain is Small ribosomal subunit protein uS4 from Rickettsia felis (strain ATCC VR-1525 / URRWXCal2) (Rickettsia azadi).